A 75-amino-acid chain; its full sequence is Small ribosomal subunit protein bS18 (75 aa).

This sequence belongs to the bacterial ribosomal protein bS18 family. In terms of assembly, part of the 30S ribosomal subunit. Forms a tight heterodimer with protein bS6.

In terms of biological role, binds as a heterodimer with protein bS6 to the central domain of the 16S rRNA, where it helps stabilize the platform of the 30S subunit. The chain is Small ribosomal subunit protein bS18 from Psychrobacter sp. (strain PRwf-1).